The chain runs to 149 residues: Large ribosomal subunit protein bL9 (149 aa).

This sequence belongs to the bacterial ribosomal protein bL9 family.

In terms of biological role, binds to the 23S rRNA. The polypeptide is Large ribosomal subunit protein bL9 (Leptospira borgpetersenii serovar Hardjo-bovis (strain JB197)).